The primary structure comprises 216 residues: Uracil phosphoribosyltransferase (216 aa).

Residues Arg85, Arg110, and 136-144 each bind 5-phospho-alpha-D-ribose 1-diphosphate; that span reads DPMLATGNS. Uracil is bound by residues Ile201 and 206-208; that span reads GDA. Asp207 provides a ligand contact to 5-phospho-alpha-D-ribose 1-diphosphate.

This sequence belongs to the UPRTase family. Mg(2+) is required as a cofactor.

It catalyses the reaction UMP + diphosphate = 5-phospho-alpha-D-ribose 1-diphosphate + uracil. The protein operates within pyrimidine metabolism; UMP biosynthesis via salvage pathway; UMP from uracil: step 1/1. Its activity is regulated as follows. Allosterically activated by GTP. Its function is as follows. Catalyzes the conversion of uracil and 5-phospho-alpha-D-ribose 1-diphosphate (PRPP) to UMP and diphosphate. This Rhodospirillum centenum (strain ATCC 51521 / SW) protein is Uracil phosphoribosyltransferase.